Here is a 492-residue protein sequence, read N- to C-terminus: Adenosylhomocysteinase-like 2 (492 aa).

Residues 43–64 (FTGSSDEEDVSPKDNHQRNSAG) are disordered. Substrate is bound by residues aspartate 192 and glutamate 217. 218 to 220 (SVT) provides a ligand contact to NAD(+). Substrate is bound by residues lysine 247 and aspartate 251. Residues 283-288 (GDVGKG), glutamate 304, 360-362 (MGH), asparagine 407, lysine 486, 486-490 (KANYY), and tyrosine 490 each bind NAD(+).

This sequence belongs to the adenosylhomocysteinase family. NAD(+) serves as cofactor.

Its function is as follows. Might play a role in the regulation of methionine metabolism. The chain is Adenosylhomocysteinase-like 2 from Drosophila melanogaster (Fruit fly).